A 201-amino-acid chain; its full sequence is Myosin regulatory light chain 2 (201 aa).

The interval 1-48 (MADKDKKVKKKKAKEDAPAEEAPAAAAPAGDRQSSRGSRKAKRTGSNV) is disordered. The span at 20–29 (EEAPAAAAPA) shows a compositional bias: low complexity. Serine 46 is modified (phosphoserine). 3 consecutive EF-hand domains span residues 55 to 90 (KQVAEFKEAFQLMDHDKDGIIGKNDLRATFDSLGRL), 125 to 158 (DEDDVVINAFKTFDEEGKIDSERLRHALMTWGDK), and 159 to 194 (FSADEVDEAYDQMDIDDKGYIDTTKLIAMLTASAEE). Aspartate 68, aspartate 70, aspartate 72, and aspartate 79 together coordinate Ca(2+).

Myosin is a hexamer of 2 heavy chains and 4 light chains.

The polypeptide is Myosin regulatory light chain 2 (Bombyx mori (Silk moth)).